A 206-amino-acid polypeptide reads, in one-letter code: Uridine kinase (206 aa).

11-18 is a binding site for ATP; the sequence is GGSASGKT.

It belongs to the uridine kinase family.

It localises to the cytoplasm. It carries out the reaction uridine + ATP = UMP + ADP + H(+). The enzyme catalyses cytidine + ATP = CMP + ADP + H(+). It functions in the pathway pyrimidine metabolism; CTP biosynthesis via salvage pathway; CTP from cytidine: step 1/3. Its pathway is pyrimidine metabolism; UMP biosynthesis via salvage pathway; UMP from uridine: step 1/1. The sequence is that of Uridine kinase from Lactococcus lactis subsp. lactis (strain IL1403) (Streptococcus lactis).